The primary structure comprises 592 residues: Putative amidase ARB_02965 (592 aa).

Positions 1-21 (MKGPITFLLQLGAVYTSIASA) are cleaved as a signal peptide. N-linked (GlcNAc...) asparagine glycosylation is present at Asn120. Catalysis depends on Lys161, which acts as the Charge relay system. An N-linked (GlcNAc...) asparagine glycan is attached at Asn217. Ser242 (charge relay system) is an active-site residue. Substrate contacts are provided by residues Ser242 and 263–266 (TSGS). Ser266 functions as the Acyl-ester intermediate in the catalytic mechanism. Asn326, Asn430, and Asn528 each carry an N-linked (GlcNAc...) asparagine glycan.

This sequence belongs to the amidase family.

The protein localises to the secreted. This Arthroderma benhamiae (strain ATCC MYA-4681 / CBS 112371) (Trichophyton mentagrophytes) protein is Putative amidase ARB_02965.